Here is a 158-residue protein sequence, read N- to C-terminus: Transcriptional repressor NrdR (158 aa).

A zinc finger lies at 3-34 (CPSCQNTDSRVLESRAADAGRSVRRRRECLHC). The 91-residue stretch at 49–139 (ITVLKRNGNR…VYRHFRGIND (91 aa)) folds into the ATP-cone domain.

It belongs to the NrdR family. The cofactor is Zn(2+).

Its function is as follows. Negatively regulates transcription of bacterial ribonucleotide reductase nrd genes and operons by binding to NrdR-boxes. The protein is Transcriptional repressor NrdR of Prochlorococcus marinus (strain MIT 9303).